Here is a 291-residue protein sequence, read N- to C-terminus: Dihydroorotate dehydrogenase A (fumarate) (291 aa).

FMN-binding positions include Ser-18 and 42–43; that span reads KS. Residues Lys-42, 66–70, and Asn-126 each bind substrate; that span reads NAVGL. Residue Asn-126 participates in FMN binding. Cys-129 functions as the Nucleophile in the catalytic mechanism. Residues Lys-164 and Ile-190 each coordinate FMN. 191–192 serves as a coordination point for substrate; that stretch reads NT. FMN is bound by residues Gly-216, 242-243, and 264-265; these read GG and GS.

It belongs to the dihydroorotate dehydrogenase family. Type 1 subfamily. In terms of assembly, homodimer. FMN serves as cofactor.

Its subcellular location is the cytoplasm. It carries out the reaction (S)-dihydroorotate + fumarate = orotate + succinate. Its pathway is pyrimidine metabolism; UMP biosynthesis via de novo pathway. In terms of biological role, catalyzes the conversion of dihydroorotate to orotate with fumarate as the electron acceptor. This Lacticaseibacillus paracasei (strain ATCC 334 / BCRC 17002 / CCUG 31169 / CIP 107868 / KCTC 3260 / NRRL B-441) (Lactobacillus paracasei) protein is Dihydroorotate dehydrogenase A (fumarate) (pyrD).